Reading from the N-terminus, the 740-residue chain is 1,4-alpha-glucan branching enzyme GlgB (740 aa).

Asp-414 (nucleophile) is an active-site residue. Glu-467 functions as the Proton donor in the catalytic mechanism.

This sequence belongs to the glycosyl hydrolase 13 family. GlgB subfamily. As to quaternary structure, monomer.

The enzyme catalyses Transfers a segment of a (1-&gt;4)-alpha-D-glucan chain to a primary hydroxy group in a similar glucan chain.. It functions in the pathway glycan biosynthesis; glycogen biosynthesis. Its function is as follows. Catalyzes the formation of the alpha-1,6-glucosidic linkages in glycogen by scission of a 1,4-alpha-linked oligosaccharide from growing alpha-1,4-glucan chains and the subsequent attachment of the oligosaccharide to the alpha-1,6 position. This chain is 1,4-alpha-glucan branching enzyme GlgB, found in Rhodospirillum rubrum (strain ATCC 11170 / ATH 1.1.1 / DSM 467 / LMG 4362 / NCIMB 8255 / S1).